A 249-amino-acid polypeptide reads, in one-letter code: Sulfate transporter CysZ (249 aa).

The next 4 helical transmembrane spans lie at 26–46 (LFVL…IYFA), 71–91 (VIWP…FTML), 150–170 (LFIL…WLLF), and 206–226 (LGFG…ILMM).

The protein belongs to the CysZ family.

The protein resides in the cell inner membrane. In terms of biological role, high affinity, high specificity proton-dependent sulfate transporter, which mediates sulfate uptake. Provides the sulfur source for the cysteine synthesis pathway. This chain is Sulfate transporter CysZ, found in Pseudomonas fluorescens (strain ATCC BAA-477 / NRRL B-23932 / Pf-5).